The sequence spans 319 residues: HTH-type transcriptional regulator YidZ (319 aa).

An HTH lysR-type domain is found at 8–65 (LDLNLLLCLQLLMQERSVTKAAKRMNVTPSAVSKSLAKLRAWFDDPLFVNSPLGLSPT). The segment at residues 25 to 44 (VTKAAKRMNVTPSAVSKSLA) is a DNA-binding region (H-T-H motif).

This sequence belongs to the LysR transcriptional regulatory family.

Its function is as follows. Involved in anaerobic NO protection. This is HTH-type transcriptional regulator YidZ from Escherichia coli O17:K52:H18 (strain UMN026 / ExPEC).